Here is a 264-residue protein sequence, read N- to C-terminus: H-2 class II histocompatibility antigen, E-B beta chain (264 aa).

Residues 1 to 26 (MVWLPRVPCVAAVILLLTVLSPPMAL) form the signal peptide. The segment at 27-121 (VRDSRPWFLE…ISDKFLVRRR (95 aa)) is beta-1. Residues 27 to 225 (VRDSRPWFLE…KAQSTSAQNK (199 aa)) lie on the Extracellular side of the membrane. Disulfide bonds link Cys38/Cys106 and Cys144/Cys200. N-linked (GlcNAc...) asparagine glycosylation is present at Asn46. The interval 122 to 225 (VEPTVTVYPT…KAQSTSAQNK (104 aa)) is beta-2. In terms of domain architecture, Ig-like C1-type spans 124-214 (PTVTVYPTKT…PSLTDPVTVE (91 aa)). Residues 226 to 246 (MLSGVGGFVLGLLFLGAGLFI) traverse the membrane as a helical segment. The Cytoplasmic segment spans residues 247–264 (YFRNQKGQSGLQPTGLLS).

It belongs to the MHC class II family. Post-translationally, ubiquitinated in immature dendritic cells leading to down-regulation of MHC class II.

The protein resides in the membrane. The protein is H-2 class II histocompatibility antigen, E-B beta chain (H2-Eb1) of Mus musculus (Mouse).